Reading from the N-terminus, the 244-residue chain is Lymphotoxin-beta (244 aa).

Residues 1 to 18 lie on the Cytoplasmic side of the membrane; that stretch reads MGALGLEGRGGRLQGRGS. Residues 19–48 form a helical; Signal-anchor for type II membrane protein membrane-spanning segment; the sequence is LLLAVAGATSLVTLLLAVPITVLAVLALVP. The Extracellular segment spans residues 49-244; sequence QDQGGLVTDT…KTFFGAVMVG (196 aa). In terms of domain architecture, THD spans 88-243; it reads PAAHLIGAPL…GKTFFGAVMV (156 aa). N-linked (GlcNAc...) asparagine glycosylation is present at N222.

Belongs to the tumor necrosis factor family. As to quaternary structure, heterotrimer of either two LTB and one LTA subunits or (less prevalent) two LTA and one LTB subunits.

Its subcellular location is the membrane. Cytokine that binds to LTBR/TNFRSF3. May play a specific role in immune response regulation. Provides the membrane anchor for the attachment of the heterotrimeric complex to the cell surface. The chain is Lymphotoxin-beta (LTB) from Macaca mulatta (Rhesus macaque).